The primary structure comprises 301 residues: MLPYATAAEAEAALGRAMTAAESLWFRYSAGIPDYVLFWHNILFLFVVFTLAPLPVALLELRAPAAVGPFKLQPKVRLSREEFFRCYRDVMRLFFLVIGPLQLVSYPTVKMVGIHTGLPLPSLGEMAAQLLVYFLVEDYLNYWIHRLLHGEWGYEKIHRVHHEFTAPIGFAAPYAHWAEVLILGIPSFVGPALAPGHMITFWLWIVLRQMEAIETHSGFDFPFNLTKYIPFYGGAEYHDYHHYVGRQSQSNFASVFTYCDYLYGTDKGYRYHKAYQAKMKALGQTEGEKADSNGLSYAKLD.

3 consecutive transmembrane segments (helical) span residues Val36–Val56, Phe94–Ile114, and Ser187–Leu207. The 135-residue stretch at Leu131 to Thr265 folds into the Fatty acid hydroxylase domain.

It belongs to the sterol desaturase family. In terms of assembly, homodimer. In terms of tissue distribution, expressed ubiquitously.

It is found in the endoplasmic reticulum membrane. It catalyses the reaction a long-chain fatty aldehyde + 2 NADPH + O2 + H(+) = a long-chain alkane + formate + 2 NADP(+) + H2O. Aldehyde decarbonylase involved in the conversion of aldehydes to alkanes. Core component of a very-long-chain alkane synthesis complex. The protein is Very-long-chain aldehyde decarbonylase GL1-10 of Oryza sativa subsp. japonica (Rice).